We begin with the raw amino-acid sequence, 120 residues long: Large ribosomal subunit protein uL18 (120 aa).

This sequence belongs to the universal ribosomal protein uL18 family. As to quaternary structure, part of the 50S ribosomal subunit; part of the 5S rRNA/L5/L18/L25 subcomplex. Contacts the 5S and 23S rRNAs.

In terms of biological role, this is one of the proteins that bind and probably mediate the attachment of the 5S RNA into the large ribosomal subunit, where it forms part of the central protuberance. This chain is Large ribosomal subunit protein uL18, found in Methylorubrum populi (strain ATCC BAA-705 / NCIMB 13946 / BJ001) (Methylobacterium populi).